Consider the following 261-residue polypeptide: UPF0246 protein Rmet_0978 (261 aa).

It belongs to the UPF0246 family.

This Cupriavidus metallidurans (strain ATCC 43123 / DSM 2839 / NBRC 102507 / CH34) (Ralstonia metallidurans) protein is UPF0246 protein Rmet_0978.